The sequence spans 55 residues: Rubredoxin-1 (55 aa).

The Rubredoxin-like domain occupies 1 to 54 (MKKWQCVVCGLIYDEAKGWPEEGIEAGTRWEDVPEDWLCPDCGVGKLDFEMIEI). Fe cation-binding residues include Cys-6, Cys-9, Cys-39, and Cys-42.

Belongs to the rubredoxin family. Fe(3+) is required as a cofactor.

It localises to the cytoplasm. It functions in the pathway hydrocarbon metabolism; alkane degradation. Functionally, involved in the hydrocarbon hydroxylating system, which transfers electrons from NADH to rubredoxin reductase and then through rubredoxin to alkane 1 monooxygenase. The sequence is that of Rubredoxin-1 (rubA1) from Pseudomonas aeruginosa (strain ATCC 15692 / DSM 22644 / CIP 104116 / JCM 14847 / LMG 12228 / 1C / PRS 101 / PAO1).